A 1003-amino-acid polypeptide reads, in one-letter code: Leucine-rich repeat receptor-like serine/threonine-protein kinase BAM1 (1003 aa).

The first 19 residues, 1-19, serve as a signal peptide directing secretion; that stretch reads MKLFLLLLFLLHISHTFTA. At 20–640 the chain is on the extracellular side; that stretch reads SRPISEFRAL…HSKGPLSASM (621 aa). LRR repeat units follow at residues 68-92, 93-116, 117-140, 142-165, 166-191, 193-213, 215-238, 239-262, 263-285, 286-310, 312-334, 335-358, 359-382, 385-406, 407-430, 432-454, 455-480, 482-502, 503-526, 527-550, 551-574, and 575-598; these read RRHV…VSHL, RLLQ…ISSL, SGLR…ISSG, VNLR…VTNL, TQLR…SWPV, EYLA…IGNL, TLRE…IGNL, SELV…IGKL, QKLD…ELGT, LSSL…FAEL, NLTL…IGDL, PELE…LGEN, GKLN…MCSG, LETL…LGKC, ESLT…LFGL, KLTQ…GGVS, VNLG…NFTG, QKLL…VGKL, QQLS…ISRC, KLLT…ITAM, KILN…ISSM, and QSLT…GQFS. N-linked (GlcNAc...) asparagine glycosylation is found at asparagine 80, asparagine 97, asparagine 123, asparagine 130, asparagine 153, and asparagine 164. Residues asparagine 212 and asparagine 237 are each glycosylated (N-linked (GlcNAc...) asparagine). N-linked (GlcNAc...) asparagine glycosylation is found at asparagine 312 and asparagine 346. Asparagine 420 is a glycosylation site (N-linked (GlcNAc...) asparagine). A glycan (N-linked (GlcNAc...) asparagine) is linked at asparagine 477. 3 N-linked (GlcNAc...) asparagine glycosylation sites follow: asparagine 557, asparagine 586, and asparagine 601. Residues 641–661 traverse the membrane as a helical segment; sequence KLLLVLGLLVCSIAFAVVAII. Residues 662-1003 are Cytoplasmic-facing; that stretch reads KARSLKKASE…VQSPPDLLNL (342 aa). A Phosphothreonine modification is found at threonine 686. A Protein kinase domain is found at 694 to 971; that stretch reads LKEDNIIGKG…VQILTEIPKL (278 aa). ATP-binding positions include 700–708 and lysine 722; that span reads IGKGGAGIV. Tyrosine 769 and tyrosine 807 each carry phosphotyrosine. The active-site Proton acceptor is aspartate 820. Serine 855 bears the Phosphoserine mark. A phosphotyrosine mark is found at tyrosine 863 and tyrosine 870. Threonine 871 bears the Phosphothreonine mark. The segment at 969–1003 is disordered; that stretch reads PKLPPSKDQPMTESAPESELSPKSGVQSPPDLLNL. Serine 996 carries the post-translational modification Phosphoserine.

It belongs to the protein kinase superfamily. Ser/Thr protein kinase family. As to quaternary structure, self-interacts and interacts with BAM2 and CLV1. Binds to the CLV3, CLE5, CLE11, CLE18, CLE19, CLE22, CLE25, CLE26, CLE40, CLE41 and CLE42 mature peptides, probably via its extracellular leucine-rich repeat region. In terms of tissue distribution, expressed in seedlings, roots, leaves, inflorescences, flowers and siliques.

Its subcellular location is the cell membrane. The enzyme catalyses L-seryl-[protein] + ATP = O-phospho-L-seryl-[protein] + ADP + H(+). It carries out the reaction L-threonyl-[protein] + ATP = O-phospho-L-threonyl-[protein] + ADP + H(+). Functionally, necessary for male gametophyte development, as well as ovule specification and function. Involved in cell-cell communication process required during early anther development, and regulating cell division and differentiation to organize cell layers. Required for the development of high-ordered vascular strands within the leaf and a correlated control of leaf shape, size and symmetry. May regulate the CLV1-dependent CLV3-mediated signaling in meristems maintenance. The sequence is that of Leucine-rich repeat receptor-like serine/threonine-protein kinase BAM1 (BAM1) from Arabidopsis thaliana (Mouse-ear cress).